The following is a 320-amino-acid chain: Lipoyl synthase (320 aa).

The [4Fe-4S] cluster site is built by cysteine 67, cysteine 72, cysteine 78, cysteine 93, cysteine 97, cysteine 100, and serine 307. The region spanning phenylalanine 79 to glutamate 296 is the Radical SAM core domain.

The protein belongs to the radical SAM superfamily. Lipoyl synthase family. [4Fe-4S] cluster is required as a cofactor.

Its subcellular location is the cytoplasm. It catalyses the reaction [[Fe-S] cluster scaffold protein carrying a second [4Fe-4S](2+) cluster] + N(6)-octanoyl-L-lysyl-[protein] + 2 oxidized [2Fe-2S]-[ferredoxin] + 2 S-adenosyl-L-methionine + 4 H(+) = [[Fe-S] cluster scaffold protein] + N(6)-[(R)-dihydrolipoyl]-L-lysyl-[protein] + 4 Fe(3+) + 2 hydrogen sulfide + 2 5'-deoxyadenosine + 2 L-methionine + 2 reduced [2Fe-2S]-[ferredoxin]. The protein operates within protein modification; protein lipoylation via endogenous pathway; protein N(6)-(lipoyl)lysine from octanoyl-[acyl-carrier-protein]: step 2/2. Its function is as follows. Catalyzes the radical-mediated insertion of two sulfur atoms into the C-6 and C-8 positions of the octanoyl moiety bound to the lipoyl domains of lipoate-dependent enzymes, thereby converting the octanoylated domains into lipoylated derivatives. This is Lipoyl synthase from Haemophilus influenzae (strain 86-028NP).